Consider the following 202-residue polypeptide: 3-isopropylmalate dehydratase small subunit (202 aa).

This sequence belongs to the LeuD family. LeuD type 1 subfamily. In terms of assembly, heterodimer of LeuC and LeuD.

The enzyme catalyses (2R,3S)-3-isopropylmalate = (2S)-2-isopropylmalate. Its pathway is amino-acid biosynthesis; L-leucine biosynthesis; L-leucine from 3-methyl-2-oxobutanoate: step 2/4. Its function is as follows. Catalyzes the isomerization between 2-isopropylmalate and 3-isopropylmalate, via the formation of 2-isopropylmaleate. This Paenarthrobacter aurescens (strain TC1) protein is 3-isopropylmalate dehydratase small subunit.